The chain runs to 333 residues: MSYHLEKLNIKFIINQALIEIKNCKNIKELELIRIYWIGKNGFFSKKNKLLNILFPYEDFIKKDMLKKAYKKIKYIYFKKKQKIKNKEIKIKIFKEKIDISLPGRDVCNGSFHPISNIIRYSEKFFCSLGFSIVHGHEVENIYYNFDALNIPENHPSRTEHDTFWINENCLLRTQTSGIQIKVMESKKPPLKIISSGKVYRNDHDKTHTPMFHQLEGLMIDECIGISIVKSILYDFCYSLLGKKIKIRFRPSYFPFTEPSAEIDIMNEDGKWIEILGCGIVHPKILHNLKIDRNKYSGMAFGIGIERLAMLYYKLSDVRPLFINNLRFLKQFK.

Glutamate 258 serves as a coordination point for Mg(2+).

The protein belongs to the class-II aminoacyl-tRNA synthetase family. Phe-tRNA synthetase alpha subunit type 1 subfamily. As to quaternary structure, tetramer of two alpha and two beta subunits. Mg(2+) is required as a cofactor.

It is found in the cytoplasm. It catalyses the reaction tRNA(Phe) + L-phenylalanine + ATP = L-phenylalanyl-tRNA(Phe) + AMP + diphosphate + H(+). The sequence is that of Phenylalanine--tRNA ligase alpha subunit from Wigglesworthia glossinidia brevipalpis.